The primary structure comprises 239 residues: DNA repair protein RecO (239 aa).

Belongs to the RecO family.

Its function is as follows. Involved in DNA repair and RecF pathway recombination. This chain is DNA repair protein RecO, found in Cereibacter sphaeroides (strain KD131 / KCTC 12085) (Rhodobacter sphaeroides).